The primary structure comprises 155 residues: Transcription antitermination protein NusB (155 aa).

This sequence belongs to the NusB family.

Involved in transcription antitermination. Required for transcription of ribosomal RNA (rRNA) genes. Binds specifically to the boxA antiterminator sequence of the ribosomal RNA (rrn) operons. The polypeptide is Transcription antitermination protein NusB (Ralstonia pickettii (strain 12J)).